The chain runs to 992 residues: UvrABC system protein A (992 aa).

Polar residues predominate over residues 1 to 11 (MPKNSSTTVSS). The disordered stretch occupies residues 1–30 (MPKNSSTTVSSAVEAHAGGLASGPGGARSG). Position 62–69 (62–69 (GLSGSGKS)) interacts with ATP. A C4-type; atypical zinc finger spans residues 302 to 330 (CPNGHEQTVDEIEPRSFSFNNPFGACPEC). 2 ABC transporter domains span residues 360–639 (WSLG…TRSV) and 659–988 (PEKG…RFLA). 692 to 699 (GVSGSGKS) serves as a coordination point for ATP. Residues 791–817 (CEACAGDGTLKIEMNFLPDVYVPCEVC) form a C4-type zinc finger.

This sequence belongs to the ABC transporter superfamily. UvrA family. Forms a heterotetramer with UvrB during the search for lesions.

The protein resides in the cytoplasm. Functionally, the UvrABC repair system catalyzes the recognition and processing of DNA lesions. UvrA is an ATPase and a DNA-binding protein. A damage recognition complex composed of 2 UvrA and 2 UvrB subunits scans DNA for abnormalities. When the presence of a lesion has been verified by UvrB, the UvrA molecules dissociate. The protein is UvrABC system protein A of Micrococcus luteus (Micrococcus lysodeikticus).